The following is a 432-amino-acid chain: Adenosine 3'-phospho 5'-phosphosulfate transporter 1 (432 aa).

The next 9 membrane-spanning stretches (helical) occupy residues 5-25 (WWAV…ETPE), 40-60 (VVNA…VQYF), 109-129 (ALKL…WGVL), 154-174 (FLVL…CVLC), 238-258 (WEYL…LSSG), 265-285 (PATT…DSFT), 299-319 (SVQM…GSLL), 353-373 (LFIF…IMTL), and 387-407 (GHTV…ALLL). Residue Ser-427 is modified to Phosphoserine.

The protein belongs to the nucleotide-sugar transporter family. SLC35B subfamily. As to expression, highly expressed in the placenta, pancreas, mammary gland and skeletal muscle. Weakly or not expressed in colon, heart and prostate. Expressed in the brain, predominantly in frontal lobe gray matter, subcortical frontal white matter and cerebellum.

The protein localises to the golgi apparatus membrane. It carries out the reaction 3'-phosphoadenylyl sulfate(in) + adenosine 3',5'-bisphosphate(out) = 3'-phosphoadenylyl sulfate(out) + adenosine 3',5'-bisphosphate(in). Its function is as follows. Probably functions as a 3'-phosphoadenylyl sulfate:adenosine 3',5'-bisphosphate antiporter at the Golgi membranes. Mediates the transport from the cytosol into the lumen of the Golgi of 3'-phosphoadenylyl sulfate/adenosine 3'-phospho 5'-phosphosulfate (PAPS), a universal sulfuryl donor for sulfation events that take place in that compartment. The protein is Adenosine 3'-phospho 5'-phosphosulfate transporter 1 of Homo sapiens (Human).